Here is a 239-residue protein sequence, read N- to C-terminus: uncharacterized protein (239 aa).

Residues 193–214 form a disordered region; that stretch reads RKRKLNLSDGENKAKSPYSSIS.

It is found in the nucleus. This is an uncharacterized protein from Schizosaccharomyces pombe (strain 972 / ATCC 24843) (Fission yeast).